Consider the following 40-residue polypeptide: Sauvagin (40 aa).

Gln-1 carries the post-translational modification Pyrrolidone carboxylic acid. Ile-40 carries the post-translational modification Isoleucine amide.

It belongs to the sauvagine/corticotropin-releasing factor/urotensin I family.

It localises to the secreted. Its function is as follows. Hypotensive and diuretic peptide. The sequence is that of Sauvagin from Phyllomedusa sauvagei (Sauvage's leaf frog).